A 681-amino-acid polypeptide reads, in one-letter code: Methionine--tRNA ligase (681 aa).

A 'HIGH' region motif is present at residues 27 to 37 (DYANGTPHIGH). Residues 316-320 (KMGKS) carry the 'KMSKS' region motif. Lys319 contributes to the ATP binding site. Positions 522-571 (FPKPEPKADETKNAEAKPPKPQAKKEKKTVTDTAPAKTTEQKPEAAAPAQ) are disordered. A compositionally biased stretch (basic and acidic residues) spans 525–539 (PEPKADETKNAEAKP). Positions 580-681 (DFAKIDLRIA…LDLPSGTKVR (102 aa)) constitute a tRNA-binding domain.

The protein belongs to the class-I aminoacyl-tRNA synthetase family. MetG type 2B subfamily. In terms of assembly, homodimer.

The protein localises to the cytoplasm. The enzyme catalyses tRNA(Met) + L-methionine + ATP = L-methionyl-tRNA(Met) + AMP + diphosphate. In terms of biological role, is required not only for elongation of protein synthesis but also for the initiation of all mRNA translation through initiator tRNA(fMet) aminoacylation. The polypeptide is Methionine--tRNA ligase (metG) (Deinococcus radiodurans (strain ATCC 13939 / DSM 20539 / JCM 16871 / CCUG 27074 / LMG 4051 / NBRC 15346 / NCIMB 9279 / VKM B-1422 / R1)).